A 658-amino-acid chain; its full sequence is Probable transketolase (658 aa).

A substrate-binding site is contributed by H24. Thiamine diphosphate is bound by residues H64 and 113 to 115 (GPL). D154 is a Mg(2+) binding site. Thiamine diphosphate-binding residues include G155 and N184. 2 residues coordinate Mg(2+): N184 and I186. H259, R354, and S381 together coordinate substrate. Position 259 (H259) interacts with thiamine diphosphate. Residue E408 is the Proton donor of the active site. F434 lines the thiamine diphosphate pocket. Residues H458, D466, and R517 each contribute to the substrate site.

The protein belongs to the transketolase family. Homodimer. It depends on Mg(2+) as a cofactor. Requires Ca(2+) as cofactor. The cofactor is Mn(2+). Co(2+) serves as cofactor. Thiamine diphosphate is required as a cofactor.

It catalyses the reaction D-sedoheptulose 7-phosphate + D-glyceraldehyde 3-phosphate = aldehydo-D-ribose 5-phosphate + D-xylulose 5-phosphate. Functionally, necessary for high-efficiency recombination chromosomal DNA during genetic transformation. Catalyzes the transfer of a two-carbon ketol group from a ketose donor to an aldose acceptor, via a covalent intermediate with the cofactor thiamine pyrophosphate. This is Probable transketolase (tkt) from Streptococcus pneumoniae serotype 4 (strain ATCC BAA-334 / TIGR4).